The following is a 417-amino-acid chain: Gamma-glutamyl phosphate reductase (417 aa).

The protein belongs to the gamma-glutamyl phosphate reductase family.

The protein localises to the cytoplasm. It carries out the reaction L-glutamate 5-semialdehyde + phosphate + NADP(+) = L-glutamyl 5-phosphate + NADPH + H(+). It participates in amino-acid biosynthesis; L-proline biosynthesis; L-glutamate 5-semialdehyde from L-glutamate: step 2/2. In terms of biological role, catalyzes the NADPH-dependent reduction of L-glutamate 5-phosphate into L-glutamate 5-semialdehyde and phosphate. The product spontaneously undergoes cyclization to form 1-pyrroline-5-carboxylate. The protein is Gamma-glutamyl phosphate reductase of Enterococcus faecalis (strain ATCC 700802 / V583).